The chain runs to 1942 residues: Probable helicase with zinc finger domain (1942 aa).

Residues 178-206 (SEEYTLCKRFLEQGICRYGAQCTSAHSQE) form a C3H1-type zinc finger. Serine 248 bears the Phosphoserine mark. ATP is bound at residue 668 to 675 (GPYGTGKT). Positions 794 to 797 (DEAA) match the DEAA box motif. Positions 1117 to 1127 (SGSTNKQQQSP) are enriched in polar residues. The disordered stretch occupies residues 1117–1141 (SGSTNKQQQSPPKGKSLHHTQNDHF). Threonine 1163 is modified (phosphothreonine). Arginine 1245 carries the post-translational modification Omega-N-methylarginine. 4 disordered regions span residues 1246–1345 (GSPI…INLP), 1386–1429 (NLPE…GPNN), 1527–1552 (QGSAPYPHHHHPHLQHLPQPPLGLHQ), and 1608–1637 (RQVQSRSPPAVPSPPSSTDHSSHFSNFNDN). Composition is skewed to basic and acidic residues over residues 1268–1281 (HQEKDQHEQNRNGK) and 1292–1308 (NKIRTPEKKPTEPKQVD). Positions 1399 to 1412 (NQVVQQQSQLNQQP) are enriched in low complexity. Phosphoserine is present on serine 1614. A compositionally biased stretch (low complexity) spans 1623-1636 (SSTDHSSHFSNFND). Serine 1645, serine 1738, serine 1741, and serine 1766 each carry phosphoserine. Disordered stretches follow at residues 1729-1779 (FHPL…TPQD), 1792-1843 (NQSS…PEDQ), and 1870-1942 (MPNK…SYFK). A compositionally biased stretch (low complexity) spans 1731–1745 (PLSSRTVSSSSLPSL). Composition is skewed to polar residues over residues 1761-1779 (RISSSSVQPCSEEVSTPQD) and 1792-1825 (NQSSFNFSSPESWVNTTSSTPYQNIPCNGSSRTA). 2 stretches are compositionally biased toward low complexity: residues 1876-1888 (AESANSSSPQSSA) and 1920-1942 (LSLFQELSLGSSSGSNGFYSYFK).

The protein belongs to the DNA2/NAM7 helicase family. In terms of assembly, interacts with SMYD2. Interacts with POLR2A. Interacts with SMYD3; the interaction may bridge SMYD3 and RNA polymerase II. In terms of tissue distribution, expressed predominantly in thymus and brain. Expression is down-regulated in 28 of 95 tested cancer cell lines.

Its subcellular location is the nucleus. Functionally, may act as a helicase that plays a role in RNA metabolism in multiple tissues and organs within the developing embryo. This is Probable helicase with zinc finger domain (HELZ) from Homo sapiens (Human).